Here is a 370-residue protein sequence, read N- to C-terminus: tRNA 2-selenouridine synthase (370 aa).

One can recognise a Rhodanese domain in the interval 12–136 (FLDDVPMMDM…MRTFLLETTQ (125 aa)). C95 serves as the catalytic S-selanylcysteine intermediate.

The protein belongs to the SelU family. As to quaternary structure, monomer.

It carries out the reaction 5-methylaminomethyl-2-thiouridine(34) in tRNA + selenophosphate + (2E)-geranyl diphosphate + H2O + H(+) = 5-methylaminomethyl-2-selenouridine(34) in tRNA + (2E)-thiogeraniol + phosphate + diphosphate. The catalysed reaction is 5-methylaminomethyl-2-thiouridine(34) in tRNA + (2E)-geranyl diphosphate = 5-methylaminomethyl-S-(2E)-geranyl-thiouridine(34) in tRNA + diphosphate. The enzyme catalyses 5-methylaminomethyl-S-(2E)-geranyl-thiouridine(34) in tRNA + selenophosphate + H(+) = 5-methylaminomethyl-2-(Se-phospho)selenouridine(34) in tRNA + (2E)-thiogeraniol. It catalyses the reaction 5-methylaminomethyl-2-(Se-phospho)selenouridine(34) in tRNA + H2O = 5-methylaminomethyl-2-selenouridine(34) in tRNA + phosphate. In terms of biological role, involved in the post-transcriptional modification of the uridine at the wobble position (U34) of tRNA(Lys), tRNA(Glu) and tRNA(Gln). Catalyzes the conversion of 2-thiouridine (S2U-RNA) to 2-selenouridine (Se2U-RNA). Acts in a two-step process involving geranylation of 2-thiouridine (S2U) to S-geranyl-2-thiouridine (geS2U) and subsequent selenation of the latter derivative to 2-selenouridine (Se2U) in the tRNA chain. In Pseudomonas putida (strain ATCC 700007 / DSM 6899 / JCM 31910 / BCRC 17059 / LMG 24140 / F1), this protein is tRNA 2-selenouridine synthase.